The following is a 780-amino-acid chain: Striatin (780 aa).

Positions 53-120 (LHFLQHEWAR…QERAKYHKLK (68 aa)) form a coiled coil. The interval 55-63 (FLQHEWARF) is caveolin-binding. Positions 124–145 (ELNQGDMKPPSYDSDEGNETEV) are disordered. S137 carries the phosphoserine modification. The segment at 149–166 (QNSQFMWKQGRQLLRQYL) is calmodulin-binding. T225 is subject to Phosphothreonine. A phosphoserine mark is found at S227, S229, S245, and S259. Disordered stretches follow at residues 290 to 321 (FLVA…TPER), 334 to 353 (EQYK…NRSK), and 363 to 388 (DVDE…LPEQ). Residues 299–315 (NESRSAGDGTDWEKEDQ) are compositionally biased toward basic and acidic residues. Residues 338–351 (KERKGKKGVKRPNR) show a composition bias toward basic residues. WD repeat units follow at residues 461–500 (SHFD…PAKK), 514–553 (AHKG…VDPY), 567–606 (GHTD…PALT), 662–701 (SSSC…LIHS), 704–743 (AHLE…CIQE), and 750–780 (KFEE…KVFV).

Belongs to the WD repeat striatin family. As to quaternary structure, part of the core of STRIPAK complexes composed of PP2A catalytic and scaffolding subunits, the striatins (PP2A regulatory subunits), the striatin-associated proteins MOB4, STRIP1 and STRIP2, PDCD10 and members of the STE20 kinases, such as STK24 and STK26. Interacts with CTTNBP2; this interaction may regulate dendritic spine distribution of STRN. Activation of glutamate receptors weakens the interaction with CTTNBP2. Mainly expressed in the central nervous system. Mostly confined in dendrites, not in axons, and is most abundant in dendritic spines.

Its subcellular location is the cytoplasm. The protein localises to the membrane. The protein resides in the cell projection. It is found in the dendritic spine. Functionally, calmodulin-binding scaffolding protein which is the center of the striatin-interacting phosphatase and kinase (STRIPAK) complexes. STRIPAK complexes have critical roles in protein (de)phosphorylation and are regulators of multiple signaling pathways including Hippo, MAPK, nuclear receptor and cytoskeleton remodeling. Different types of STRIPAK complexes are involved in a variety of biological processes such as cell growth, differentiation, apoptosis, metabolism and immune regulation. In Rattus norvegicus (Rat), this protein is Striatin (Strn).